Reading from the N-terminus, the 242-residue chain is Lactate utilization protein A 2 (242 aa).

It belongs to the LutA/YkgE family.

In terms of biological role, is involved in L-lactate degradation and allows cells to grow with lactate as the sole carbon source. In Bacillus cereus (strain Q1), this protein is Lactate utilization protein A 2.